Consider the following 345-residue polypeptide: L-threonine 3-dehydrogenase (345 aa).

C39 lines the Zn(2+) pocket. Residues T41 and H44 each act as charge relay system in the active site. 6 residues coordinate Zn(2+): H64, E65, C94, C97, C100, and C108. Residues I176, D196, R201, 263–265, and 287–288 each bind NAD(+); these read LGI and VY.

The protein belongs to the zinc-containing alcohol dehydrogenase family. As to quaternary structure, homotetramer. Requires Zn(2+) as cofactor.

It is found in the cytoplasm. The enzyme catalyses L-threonine + NAD(+) = (2S)-2-amino-3-oxobutanoate + NADH + H(+). Its pathway is amino-acid degradation; L-threonine degradation via oxydo-reductase pathway; glycine from L-threonine: step 1/2. Catalyzes the NAD(+)-dependent oxidation of L-threonine to 2-amino-3-ketobutyrate. In Anaeromyxobacter dehalogenans (strain 2CP-1 / ATCC BAA-258), this protein is L-threonine 3-dehydrogenase.